Here is a 396-residue protein sequence, read N- to C-terminus: 1-deoxy-D-xylulose 5-phosphate reductoisomerase (396 aa).

6 residues coordinate NADPH: T15, G16, S17, I18, G41, and N129. K130 contacts 1-deoxy-D-xylulose 5-phosphate. E131 is a binding site for NADPH. D155 is a binding site for Mn(2+). 1-deoxy-D-xylulose 5-phosphate-binding residues include S156, E157, S182, and H205. Residue E157 participates in Mn(2+) binding. G211 lines the NADPH pocket. Residues S218, N223, K224, and E227 each coordinate 1-deoxy-D-xylulose 5-phosphate. Mn(2+) is bound at residue E227.

The protein belongs to the DXR family. Mg(2+) is required as a cofactor. Requires Mn(2+) as cofactor.

The enzyme catalyses 2-C-methyl-D-erythritol 4-phosphate + NADP(+) = 1-deoxy-D-xylulose 5-phosphate + NADPH + H(+). The protein operates within isoprenoid biosynthesis; isopentenyl diphosphate biosynthesis via DXP pathway; isopentenyl diphosphate from 1-deoxy-D-xylulose 5-phosphate: step 1/6. In terms of biological role, catalyzes the NADPH-dependent rearrangement and reduction of 1-deoxy-D-xylulose-5-phosphate (DXP) to 2-C-methyl-D-erythritol 4-phosphate (MEP). This Xanthomonas campestris pv. campestris (strain B100) protein is 1-deoxy-D-xylulose 5-phosphate reductoisomerase.